Here is a 989-residue protein sequence, read N- to C-terminus: Presequence protease, mitochondrial (989 aa).

Residues 1–16 (MLRFQRFASSYAQAQA) constitute a mitochondrion transit peptide. Position 84 (His84) interacts with Zn(2+). Residue Glu87 is the Proton acceptor of the active site. His88 contacts Zn(2+). The active site involves Glu160. Glu185 serves as a coordination point for Zn(2+). Ser920 is subject to Phosphoserine. Residue 972-979 (GPGIEGKT) participates in ATP binding.

This sequence belongs to the peptidase M16 family. PreP subfamily. As to quaternary structure, monomer and homodimer; homodimerization is induced by binding of the substrate. Zn(2+) is required as a cofactor.

It is found in the mitochondrion intermembrane space. The protein resides in the mitochondrion matrix. Activated by nucleotides, including ATP, GTP, CTP, UTP, and ADP. Activated by copper, manganese, calcium and magnesium ions; copper and manganese restore activity following inactivation by EDTA (ethylenediaminetetraacetic acid). Inhibited by metal chelators including EDTA, EGTA (ethylene glycol bis(2-aminoethyl)tetraacetic acid), and 1,10-phenanthroline. Inhibited by copper, zinc, and iron ions. Also inhibited by dithiothreitol p-mercuribenzenesulfonic acid, N-ethylmaleimide, protoporphyrin, hemin, protamine and triarginine. Functionally, degrades mitochondrial transit peptides after their cleavage in the intermembrane space or in the matrix, and presequence peptides; clearance of these peptides is required to keep the presequence processing machinery running. Preferentially cleaves the N-terminal side of paired basic amino acid residues. Also degrades other unstructured peptides. May function as an ATP-dependent peptidase as opposed to a metalloendopeptidase. The polypeptide is Presequence protease, mitochondrial (Saccharomyces cerevisiae (strain ATCC 204508 / S288c) (Baker's yeast)).